The chain runs to 146 residues: Transmembrane protein 207 (146 aa).

Positions 1-29 (MSRSRLFSVTSAISTIGILCLPLFQLVLS) are cleaved as a signal peptide. The chain crosses the membrane as a helical span at residues 52-72 (IWILLLLVLVAALLCGAVVLC).

As to quaternary structure, interacts with WWOX. As to expression, expressed in some signet-ring cell carcinoma, especially those showing high invasion and metastatic activity (at protein level).

The protein localises to the membrane. This is Transmembrane protein 207 (TMEM207) from Homo sapiens (Human).